The chain runs to 1258 residues: Phosphatidylinositol 3,4,5-trisphosphate 5-phosphatase 2 (1258 aa).

Residues Trp21–Val117 form the SH2 domain. A compositionally biased stretch (basic and acidic residues) spans Gly119 to Ser132. A disordered region spans residues Gly119 to Thr180. The residue at position 132 (Ser132) is a Phosphoserine. Residues Ser145–Gly155 are compositionally biased toward polar residues. Residues Pro156–Pro166 show a composition bias toward pro residues. Thr165 is subject to Phosphothreonine. A phosphoserine mark is found at Ser241 and Ser352. Position 886 is a phosphotyrosine (Tyr886). Ser890 carries the phosphoserine modification. A disordered region spans residues Gly897–Asp1118. The segment covering Pro938 to Ala950 has biased composition (pro residues). An SH3-binding motif is present at residues Pro944–Arg949. Basic and acidic residues predominate over residues Ala951–Gly965. Thr958 is modified (phosphothreonine). The short motif at Asn983 to Tyr986 is the NPXY motif element. Tyr986 carries the post-translational modification Phosphotyrosine; by SRC. Composition is skewed to pro residues over residues Leu996–Ala1007, Leu1048–Pro1059, and Gly1087–Ser1104. A Phosphoserine modification is found at Ser1131. Phosphotyrosine occurs at positions 1135 and 1162. The 63-residue stretch at Leu1196–Lys1258 folds into the SAM domain. Ser1257 is subject to Phosphoserine.

The protein belongs to the inositol 1,4,5-trisphosphate 5-phosphatase family. As to quaternary structure, interacts with tyrosine phosphorylated form of SHC1. Interacts with EGFR. Upon stimulation by the EGF signaling pathway, it forms a complex with SHC1 and EGFR. Interacts with cytoskeletal protein SORBS3/vinexin, promoting its localization to the periphery of cells. Forms a complex with filamin (FLNA or FLNB), actin, GPIb (GP1BA or GP1BB) that regulates cortical and submembraneous actin. Interacts with c-Met/MET, when c-Met/MET is phosphorylated on 'Tyr-1356'. Interacts with p130Cas/BCAR1. Interacts with CENTD3/ARAP3 via its SAM domain. Interacts with c-Cbl/CBL and CAP/SORBS1. Interacts with activated EPHA2 receptor. Interacts with receptor FCGR2A. Interacts with receptor FCGR2B. Interacts with tyrosine kinase ABL1. Interacts with tyrosine kinase TEC. Interacts with CSF1R. Interacts (via N-terminus) with SH3YL1 (via SH3 domain). Interacts with FCRL6 (tyrosine phosphorylated form). Interacts (via SH2 domain) with tyrosine phosphorylated KLRC1 (via ITIM). Interacts with NEDD9/HEF1. Post-translationally, tyrosine phosphorylated by the members of the SRC family after exposure to a diverse array of extracellular stimuli such as insulin, growth factors such as EGF or PDGF, chemokines, integrin ligands and hypertonic and oxidative stress. May be phosphorylated upon IgG receptor FCGR2B-binding. Phosphorylated at Tyr-986 following cell attachment and spreading. Phosphorylated at Tyr-1162 following EGF signaling pathway stimulation. Phosphorylated at Thr-958 in response to PDGF. Widely expressed, most prominently in skeletal muscle, heart and brain. Present in platelets. Expressed in transformed myeloid cells and in primary macrophages, but not in peripheral blood monocytes.

It localises to the cytoplasm. The protein localises to the cytosol. Its subcellular location is the cytoskeleton. The protein resides in the membrane. It is found in the cell projection. It localises to the filopodium. The protein localises to the lamellipodium. Its subcellular location is the basal cell membrane. The protein resides in the nucleus. It is found in the nucleus speckle. It localises to the spindle pole. It carries out the reaction a 1,2-diacyl-sn-glycero-3-phospho-(1D-myo-inositol-3,4,5-trisphosphate) + H2O = a 1,2-diacyl-sn-glycero-3-phospho-(1D-myo-inositol-3,4-bisphosphate) + phosphate. It catalyses the reaction 1,2-dioctanoyl-sn-glycero-3-phospho-(1D-myo-inositol-3,4,5-trisphosphate) + H2O = 1,2-dioctanoyl-sn-glycero-3-phospho-(1D-myo-inositol-3,4-bisphosphate) + phosphate. The enzyme catalyses 1,2-dihexadecanoyl-sn-glycero-3-phospho-(1D-myo-inositol-3,4,5-trisphosphate) + H2O = 1,2-dihexadecanoyl-sn-glycero-3-phospho-(1D-myo-inositol-3,4-bisphosphate) + phosphate. Its activity is regulated as follows. Activated upon translocation to the sites of synthesis of PtdIns(3,4,5)P3 in the membrane. Enzymatic activity is enhanced in the presence of phosphatidylserine. Phosphatidylinositol (PtdIns) phosphatase that specifically hydrolyzes the 5-phosphate of phosphatidylinositol-3,4,5-trisphosphate (PtdIns(3,4,5)P3) to produce PtdIns(3,4)P2, thereby negatively regulating the PI3K (phosphoinositide 3-kinase) pathways. Required for correct mitotic spindle orientation and therefore progression of mitosis. Plays a central role in regulation of PI3K-dependent insulin signaling, although the precise molecular mechanisms and signaling pathways remain unclear. While overexpression reduces both insulin-stimulated MAP kinase and Akt activation, its absence does not affect insulin signaling or GLUT4 trafficking. Confers resistance to dietary obesity. May act by regulating AKT2, but not AKT1, phosphorylation at the plasma membrane. Part of a signaling pathway that regulates actin cytoskeleton remodeling. Required for the maintenance and dynamic remodeling of actin structures as well as in endocytosis, having a major impact on ligand-induced EGFR internalization and degradation. Participates in regulation of cortical and submembraneous actin by hydrolyzing PtdIns(3,4,5)P3 thereby regulating membrane ruffling. Regulates cell adhesion and cell spreading. Required for HGF-mediated lamellipodium formation, cell scattering and spreading. Acts as a negative regulator of EPHA2 receptor endocytosis by inhibiting via PI3K-dependent Rac1 activation. Acts as a regulator of neuritogenesis by regulating PtdIns(3,4,5)P3 level and is required to form an initial protrusive pattern, and later, maintain proper neurite outgrowth. Acts as a negative regulator of the FC-gamma-RIIA receptor (FCGR2A). Mediates signaling from the FC-gamma-RIIB receptor (FCGR2B), playing a central role in terminating signal transduction from activating immune/hematopoietic cell receptor systems. Involved in EGF signaling pathway. Upon stimulation by EGF, it is recruited by EGFR and dephosphorylates PtdIns(3,4,5)P3. Plays a negative role in regulating the PI3K-PKB pathway, possibly by inhibiting PKB activity. Down-regulates Fc-gamma-R-mediated phagocytosis in macrophages independently of INPP5D/SHIP1. In macrophages, down-regulates NF-kappa-B-dependent gene transcription by regulating macrophage colony-stimulating factor (M-CSF)-induced signaling. Plays a role in the localization of AURKA and NEDD9/HEF1 to the basolateral membrane at interphase in polarized cysts, thereby mediates cell cycle homeostasis, cell polarization and cilia assembly. Additionally promotion of cilia growth is also facilitated by hydrolysis of (PtdIns(3,4,5)P3) to PtdIns(3,4)P2. Promotes formation of apical membrane-initiation sites during the initial stages of lumen formation via Rho family-induced actin filament organization and CTNNB1 localization to cell-cell contacts. May also hydrolyze PtdIns(1,3,4,5)P4, and could thus affect the levels of the higher inositol polyphosphates like InsP6. Involved in endochondral ossification. This is Phosphatidylinositol 3,4,5-trisphosphate 5-phosphatase 2 from Homo sapiens (Human).